The chain runs to 125 residues: E4-ORF1 (125 aa).

The PDZ-binding signature appears at 122 to 125 (ATLV).

This sequence belongs to the dUTPase family. As to quaternary structure, binds to human MPDZ.

The protein localises to the host cytoplasm. It catalyses the reaction dUTP + H2O = dUMP + diphosphate + H(+). Its function is as follows. Plays a key role in virus oncogenecity in animals. Binds and sequesters human MUPP1/MPDZ protein in the cytoplasm, preventing it from playing a role in cellular proliferation regulation. Induces cell transformation, probably by inactivating MPDZ protein. This is E4-ORF1 (E4) from Homo sapiens (Human).